A 309-amino-acid polypeptide reads, in one-letter code: Serine/threonine-protein phosphatase CPPED1 (309 aa).

Residues 47–250 form a catalytic region; the sequence is WRIGDCDSGG…FSGHYHRNAG (204 aa). A divalent metal cation-binding residues include Asp51, Asp88, Asn125, and His244.

Belongs to the metallophosphoesterase superfamily. CPPED1 family. A divalent metal cation is required as a cofactor.

The protein resides in the cytoplasm. The enzyme catalyses O-phospho-L-seryl-[protein] + H2O = L-seryl-[protein] + phosphate. It catalyses the reaction O-phospho-L-threonyl-[protein] + H2O = L-threonyl-[protein] + phosphate. Its function is as follows. Protein phosphatase involved in the dephosphorylation of AKT kinase family. In Danio rerio (Zebrafish), this protein is Serine/threonine-protein phosphatase CPPED1 (cpped1).